The sequence spans 311 residues: tRNA pseudouridine synthase B (311 aa).

Catalysis depends on D39, which acts as the Nucleophile. The tract at residues R237–E268 is disordered. A compositionally biased stretch (low complexity) spans A254 to E268.

It belongs to the pseudouridine synthase TruB family. Type 1 subfamily.

The catalysed reaction is uridine(55) in tRNA = pseudouridine(55) in tRNA. Its function is as follows. Responsible for synthesis of pseudouridine from uracil-55 in the psi GC loop of transfer RNAs. The chain is tRNA pseudouridine synthase B from Paenarthrobacter aurescens (strain TC1).